The chain runs to 143 residues: Photosystem II extrinsic protein U (143 aa).

The signal sequence occupies residues 1 to 29 (MKRLVGVLMILGLMLTSWGLLGSPQTAIA). Residues 30–44 (ASLSPLSFNPSPVLA) constitute a propeptide that is removed on maturation.

It belongs to the PsbU family. PSII is composed of 1 copy each of membrane proteins PsbA, PsbB, PsbC, PsbD, PsbE, PsbF, PsbH, PsbI, PsbJ, PsbK, PsbL, PsbM, PsbT, PsbX, PsbY, PsbZ, Psb30/Ycf12, peripheral proteins PsbO, CyanoQ (PsbQ), PsbU, PsbV and a large number of cofactors. It forms dimeric complexes.

The protein localises to the cellular thylakoid membrane. In terms of biological role, one of the extrinsic, lumenal subunits of photosystem II (PSII). PSII is a light-driven water plastoquinone oxidoreductase, using light energy to abstract electrons from H(2)O, generating a proton gradient subsequently used for ATP formation. The extrinsic proteins stabilize the structure of photosystem II oxygen-evolving complex (OEC), the ion environment of oxygen evolution and protect the OEC against heat-induced inactivation. The polypeptide is Photosystem II extrinsic protein U (Leptolyngbya laminosa (Phormidium laminosum)).